Consider the following 343-residue polypeptide: Signal peptide peptidase 2 (343 aa).

At 1 to 19 (MKTHERAANLALAGLSLAP) the chain is on the lumenal side. Residues 20 to 40 (LVVKVNPNANVILTACLAVYV) traverse the membrane as a helical segment. Over 41–62 (GCYRSVKPTPPAETMSKEHAMR) the chain is Cytoplasmic. The chain crosses the membrane as a helical span at residues 63–83 (FPLVGSAMLLSLFLLFKFLSK). Topologically, residues 84 to 89 (DLVNTV) are lumenal. Residues 90 to 110 (LTAYFFILGIAALCATLLPSI) form a helical membrane-spanning segment. Topologically, residues 111–141 (KRFLPKEWNDNAIVWRAPLFHSLSVEFTRSQ) are cytoplasmic. A helical membrane pass occupies residues 142–162 (VVASIPGFFFCIWYAAKKHWL). Topologically, residues 163-165 (ANN) are lumenal. A helical transmembrane segment spans residues 166–186 (VLGISFCIQGIEMLSLGSFKT). Residues 187–188 (GA) are Cytoplasmic-facing. Residues 189-209 (ILLSGLFFYDIFWVFFTPVMV) form a helical membrane-spanning segment. The active site involves Asp198. Residues 210–230 (SVAKSFDAPIKLLFPTGDAAR) are Lumenal-facing. A helical transmembrane segment spans residues 231–251 (PFSMLGLGDIVIPGIFVALAL). Residue Asp239 is part of the active site. At 252-266 (RFDVSRGIKNRYFNS) the chain is on the cytoplasmic side. A helical transmembrane segment spans residues 267–287 (AFLGYTVGLTVTIIVMNWFQA). Topologically, residues 288-290 (AQP) are lumenal. Residues 290–292 (PAL) carry the PAL motif. The chain crosses the membrane as a helical span at residues 291–311 (ALLYIVPGVIGFVAVHCLWNG). The Cytoplasmic portion of the chain corresponds to 312 to 343 (EVKPLLEYNESKAEEEEACEEDTDSKQNKKKE). A compositionally biased stretch (acidic residues) spans 324–334 (AEEEEACEEDT). Residues 324–343 (AEEEEACEEDTDSKQNKKKE) form a disordered region. The Endoplasmic reticulum targeting signal signature appears at 340–343 (KKKE).

It belongs to the peptidase A22B family. Ubiquitous.

The protein localises to the endoplasmic reticulum membrane. Its function is as follows. Intramembrane-cleaving aspartic protease (I-CLiP) that cleaves type II membrane signal peptides in the hydrophobic plane of the membrane. Catalyzes intramembrane proteolysis of some signal peptides after they have been cleaved from a preprotein, resulting in the release of the fragment from the ER membrane into the cytoplasm. The chain is Signal peptide peptidase 2 (SPP2) from Oryza sativa subsp. japonica (Rice).